The following is a 733-amino-acid chain: tRNA (guanine(27)-N(2))-dimethyltransferase (733 aa).

Residues 1 to 18 show a composition bias toward acidic residues; sequence MENMAEEELLPLEKEEVE. Residues 1–78 form a disordered region; it reads MENMAEEELL…LASAPEEAKS (78 aa). T26 bears the Phosphothreonine mark. Low complexity-rich tracts occupy residues 39 to 49 and 57 to 73; these read PDSALDSAPTP and PALA…ASAP. S66 is modified (phosphoserine). The Nucleolar localization signal signature appears at 135 to 139; sequence HKLRR. A C2H2-type zinc finger spans residues 184-206; it reads YHCIICSATITRRTDMLGHVRRH. The 462-residue stretch at 227–688 folds into the Trm1 methyltransferase domain; sequence EILKEADTDV…APLMQFKSIL (462 aa). The S-adenosyl-L-methionine site is built by R260, D307, D357, and A358. Zn(2+)-binding residues include C488, C491, C513, and C515. Residue K585 forms a Glycyl lysine isopeptide (Lys-Gly) (interchain with G-Cter in SUMO2) linkage. Residues S612 and S707 each carry the phosphoserine modification.

The protein belongs to the class I-like SAM-binding methyltransferase superfamily. Trm1 family. In terms of tissue distribution, widely expressed.

It is found in the nucleus. The protein resides in the nucleolus. The enzyme catalyses guanosine(27) in tRNA(Tyr) + 2 S-adenosyl-L-methionine = N(2)-dimethylguanosine(27) in tRNA(Tyr) + 2 S-adenosyl-L-homocysteine + 2 H(+). Specifically dimethylates a single guanine residue at position 27 of tRNA(Tyr) using S-adenosyl-L-methionine as donor of the methyl groups. Dimethylation at position 27 of tRNA(Tyr) is required for efficient translation of tyrosine codons. Also required to maintain 3-(3-amino-3-carboxypropyl)uridine (acp3U) in the D-loop of several cytoplasmic tRNAs. This is tRNA (guanine(27)-N(2))-dimethyltransferase from Homo sapiens (Human).